The chain runs to 537 residues: Cytochrome c oxidase subunit 1 (537 aa).

The helical transmembrane segment at 22–42 threads the bilayer; sequence ILYLLFGLVSGIIGSVFSFII. 3 residues coordinate Ca(2+): Glu-45, Ala-48, and Gly-50. His-68 is a Fe(II)-heme a binding site. Transmembrane regions (helical) follow at residues 70–90, 104–124, 152–172, 190–210, 241–261, 279–299, 318–338, and 345–365; these read ILMIFFFIIPALFGAFGNYLV, VNNFTFWLLPPALMLLLISAL, LAILSLQLTGISSTLGSVNLI, LFAWAIMITSILLLLTLPVLA, LFWFFGHPEVYILIMPAFGVV, MLWAMLSIALLGLMVWSHHLF, IAIPTGIKIFSWLATLTGGAI, and MLYAIGFLILFTIGGLTGVIL. His-247 serves as a coordination point for Cu cation. Residues 247-251 constitute a cross-link (1'-histidyl-3'-tyrosine (His-Tyr)); it reads HPEVY. O2 is bound at residue Tyr-251. The Cu cation site is built by His-296 and His-297. Positions 375 and 376 each coordinate Mg(2+). 2 consecutive transmembrane segments (helical) span residues 379 to 399 and 418 to 438; these read FVVAHFHYVLSMGALFGLCGA and IQFWILFIGVNIVFGPQHFLG. His-383 is a heme a3 binding site. His-385 is a Fe(II)-heme a binding site. Pro-447 provides a ligand contact to Ca(2+). Residues 458-478 traverse the membrane as a helical segment; sequence FVSSIGSVISILSLFLFMYVM.

This sequence belongs to the heme-copper respiratory oxidase family. Component of the cytochrome c oxidase (complex IV, CIV), a multisubunit enzyme composed of a catalytic core of 3 subunits and several supernumerary subunits. The complex exists as a monomer or a dimer and forms supercomplexes (SCs) in the inner mitochondrial membrane with ubiquinol-cytochrome c oxidoreductase (cytochrome b-c1 complex, complex III, CIII). Heme serves as cofactor. It depends on Cu cation as a cofactor.

The protein resides in the mitochondrion inner membrane. The catalysed reaction is 4 Fe(II)-[cytochrome c] + O2 + 8 H(+)(in) = 4 Fe(III)-[cytochrome c] + 2 H2O + 4 H(+)(out). It participates in energy metabolism; oxidative phosphorylation. Functionally, component of the cytochrome c oxidase, the last enzyme in the mitochondrial electron transport chain which drives oxidative phosphorylation. The respiratory chain contains 3 multisubunit complexes succinate dehydrogenase (complex II, CII), ubiquinol-cytochrome c oxidoreductase (cytochrome b-c1 complex, complex III, CIII) and cytochrome c oxidase (complex IV, CIV), that cooperate to transfer electrons derived from NADH and succinate to molecular oxygen, creating an electrochemical gradient over the inner membrane that drives transmembrane transport and the ATP synthase. Cytochrome c oxidase is the component of the respiratory chain that catalyzes the reduction of oxygen to water. Electrons originating from reduced cytochrome c in the intermembrane space (IMS) are transferred via the dinuclear copper A center (CU(A)) of subunit 2 and heme A of subunit 1 to the active site in subunit 1, a binuclear center (BNC) formed by heme A3 and copper B (CU(B)). The BNC reduces molecular oxygen to 2 water molecules using 4 electrons from cytochrome c in the IMS and 4 protons from the mitochondrial matrix. The chain is Cytochrome c oxidase subunit 1 (cox1) from Schizosaccharomyces pombe (strain 972 / ATCC 24843) (Fission yeast).